The sequence spans 486 residues: Receptor-interacting serine/threonine-protein kinase 3 (486 aa).

At serine 2 the chain carries Phosphoserine. One can recognise a Protein kinase domain in the interval 22-292 (LKKLEFVGKG…DCEPKTNEVY (271 aa)). Residues 28–36 (VGKGGFGVV) and lysine 51 contribute to the ATP site. Aspartate 143 functions as the Proton acceptor in the catalytic mechanism. Serine 165 carries the phosphoserine modification. Residue threonine 187 is modified to Phosphothreonine. Residue serine 204 is modified to Phosphoserine; by autocatalysis. A Phosphothreonine; by autocatalysis modification is found at threonine 231. Serine 232 carries the post-translational modification Phosphoserine; by autocatalysis. Position 257 is a phosphothreonine (threonine 257). 2 positions are modified to phosphoserine: serine 304 and serine 326. Residues 312-333 (QHRSSGRNLSAREPSQRGTEMD) are disordered. Residue threonine 338 is modified to Phosphothreonine. The tract at residues 349 to 388 (LEEPSGPVPGKCPERQAQDTSVGPATPARTSSDPVAGTPQ) is disordered. Phosphoserine occurs at positions 353, 369, and 380. Residues 366–381 (QDTSVGPATPARTSSD) show a composition bias toward polar residues. Phosphothreonine is present on threonine 392. Residues 440–461 (LVFNNCSEVQIGNYNSLVAPPR) carry the RIP homotypic interaction motif (RHIM) motif. The interval 462–486 (TTASSSAKYDQAQFGRGRGWQPFHK) is disordered. Arginine 477 carries the omega-N-methylarginine modification.

It belongs to the protein kinase superfamily. TKL Ser/Thr protein kinase family. As to quaternary structure, interacts (via RIP homotypic interaction motif) with RIPK1 (via RIP homotypic interaction motif); this interaction induces RIPK1 phosphorylation and formation of a RIPK1-RIPK3 necrosis-inducing complex. Interacts with MLKL; the interaction is direct and triggers necroptosis. Interacts with ZBP1 (via RIP homotypic interaction motif); interaction with ZBP1 activates RIPK3, triggering necroptosis. Upon TNF-induced necrosis, the RIPK1-RIPK3 dimer further interacts with PGAM5 and MLKL; the formation of this complex leads to PGAM5 phosphorylation and increase in PGAM5 phosphatase activity. Binds TRAF2 and is recruited to the TNFR-1 signaling complex. Interacts with PYGL, GLUL and GLUD1; these interactions result in activation of these metabolic enzymes. Interacts with BIRC2/c-IAP1, BIRC3/c-IAP2 and XIAP/BIRC4. Interacts with ARHGEF2. Interacts with PELI1 (via atypical FHA domain); the phosphorylated form at Thr-187 binds preferentially to PELI1. Interacts with BUB1B, TRAF2 and STUB1. Interacts with CASP6. Component of the AIM2 PANoptosome complex, a multiprotein complex that drives inflammatory cell death (PANoptosis). In terms of assembly, (Microbial infection) Interacts (via RIP homotypic interaction motif) with murid herpesvirus protein RIR1; this interaction disrupts RIP3-RIP1 interactions characteristic of TNF-alpha induced necroptosis, thereby suppressing this death pathway. Post-translationally, RIPK1 and RIPK3 undergo reciprocal auto- and trans-phosphorylation. Autophosphorylated following interaction with ZBP1. Phosphorylation of Ser-204 plays a role in the necroptotic function of RIPK3. Autophosphorylates at Thr-231 and Ser-232 following activation by ZBP1: phosphorylation at these sites is a hallmark of necroptosis and is required for binding MLKL. Phosphorylation at Thr-187 is important for its kinase activity, interaction with PELI1 and for its ability to mediate TNF-induced necroptosis. Polyubiquitinated with 'Lys-48' and 'Lys-63'-linked chains by BIRC2/c-IAP1 and BIRC3/c-IAP2, leading to activation of NF-kappa-B. Ubiquitinated by STUB1 leading to its subsequent proteasome-dependent degradation. As to expression, expressed in embryo and in adult spleen, liver, testis, heart, brain and lung.

Its subcellular location is the cytoplasm. It is found in the cytosol. It localises to the nucleus. It carries out the reaction L-seryl-[protein] + ATP = O-phospho-L-seryl-[protein] + ADP + H(+). The catalysed reaction is L-threonyl-[protein] + ATP = O-phospho-L-threonyl-[protein] + ADP + H(+). With respect to regulation, activity is stimulated by ZBP1, which senses double-stranded Z-RNA structures. RIPK3-dependent necroptosis is inhibited by RIPK1: RIPK1 prevents the ZBP1-induced activation of RIPK3 via FADD-mediated recruitment of CASP8, which cleaves RIPK1 and limits TNF-induced necroptosis. Inhibited by type II inhibitor 1-(4-fluorophenyl)-N-[3-fluoro-4-(1H-pyrrolo[2,3-b]pyridin-4-yloxy)phenyl]-2-oxo-1,2-dihydropyridine-3-carboxamide. Serine/threonine-protein kinase that activates necroptosis and apoptosis, two parallel forms of cell death. Necroptosis, a programmed cell death process in response to death-inducing TNF-alpha family members, is triggered by RIPK3 following activation by ZBP1. Activated RIPK3 forms a necrosis-inducing complex and mediates phosphorylation of MLKL, promoting MLKL localization to the plasma membrane and execution of programmed necrosis characterized by calcium influx and plasma membrane damage. In addition to TNF-induced necroptosis, necroptosis can also take place in the nucleus in response to orthomyxoviruses infection: following ZBP1 activation, which senses double-stranded Z-RNA structures, nuclear RIPK3 catalyzes phosphorylation and activation of MLKL, promoting disruption of the nuclear envelope and leakage of cellular DNA into the cytosol. Also regulates apoptosis: apoptosis depends on RIPK1, FADD and CASP8, and is independent of MLKL and RIPK3 kinase activity. Phosphorylates RIPK1: RIPK1 and RIPK3 undergo reciprocal auto- and trans-phosphorylation. In some cell types, also able to restrict viral replication by promoting cell death-independent responses. In response to flavivirus infection in neurons, promotes a cell death-independent pathway that restricts viral replication: together with ZBP1, promotes a death-independent transcriptional program that modifies the cellular metabolism via up-regulation expression of the enzyme ACOD1/IRG1 and production of the metabolite itaconate. Itaconate inhibits the activity of succinate dehydrogenase, generating a metabolic state in neurons that suppresses replication of viral genomes. RIPK3 binds to and enhances the activity of three metabolic enzymes: GLUL, GLUD1, and PYGL. These metabolic enzymes may eventually stimulate the tricarboxylic acid cycle and oxidative phosphorylation, which could result in enhanced ROS production. In Mus musculus (Mouse), this protein is Receptor-interacting serine/threonine-protein kinase 3.